Reading from the N-terminus, the 170-residue chain is Cathelicidin antimicrobial peptide (170 aa).

Positions 1–30 (MKTQRDSPSLGRWSLVLLLLGLVMPLAIVA) are cleaved as a signal peptide. A propeptide spans 31–131 (QVLSYQEAVL…DISCDKDNRR (101 aa)) (cathelin-like domain (CLD)). Intrachain disulfides connect C86/C97 and C108/C125. An active core region spans residues 150–162 (FKRIVQRIKDFLQ).

It belongs to the cathelicidin family. In terms of assembly, monomer, homodimer or homotrimer (in vitro). Oligomerizes as tetra- or hexamer in solution (in vitro). Proteolytically cleaved by proteinase PRTN3 into antibacterial peptide LL-37. Proteolytically cleaved by cathepsin CTSG and neutrophil elastase ELANE. Post-translationally, resistant to proteolytic degradation in solution, and when bound to both zwitterionic (mimicking mammalian membranes) and negatively charged membranes (mimicking bacterial membranes). In terms of processing, after secretion onto the skin surface, the CAMP gene product is processed by a serine protease-dependent mechanism into multiple novel antimicrobial peptides distinct from and shorter than cathelicidin LL-37. These peptides show enhanced antimicrobial action, acquiring the ability to kill skin pathogens such as S.aureus, E.coli and C.albicans. These peptides have lost the ability to stimulate CXCL8/IL8 release from keratinocytes. The peptides act synergistically, killing bacteria at lower concentrations when present together, and maintain activity at increased salt condition.

It is found in the secreted. It localises to the vesicle. Its function is as follows. Antimicrobial protein that is an integral component of the innate immune system. Binds to bacterial lipopolysaccharides (LPS). Acts via neutrophil N-formyl peptide receptors to enhance the release of CXCL2. Postsecretory processing generates multiple cathelicidin antimicrobial peptides with various lengths which act as a topical antimicrobial defense in sweat on skin. The unprocessed precursor form, cathelicidin antimicrobial peptide, inhibits the growth of Gram-negative E.coli and E.aerogenes with efficiencies comparable to that of the mature peptide LL-37 (in vitro). Antimicrobial peptide that is an integral component of the innate immune system. Binds to bacterial lipopolysaccharides (LPS). Causes membrane permeabilization by forming transmembrane pores (in vitro). Causes lysis of E.coli. Exhibits antimicrobial activity against Gram-negative bacteria such as P.aeruginosa, S.typhimurium, E.aerogenes, E.coli and P.syringae, Gram-positive bacteria such as L.monocytogenes, S.epidermidis, S.pyogenes and S.aureus, as well as vancomycin-resistant enterococci (in vitro). Exhibits antimicrobial activity against methicillin-resistant S.aureus, P.mirabilis, and C.albicans in low-salt media, but not in media containing 100 mM NaCl (in vitro). Forms chiral supramolecular assemblies with quinolone signal (PQS) molecules of P.aeruginosa, which may lead to interference of bacterial quorum signaling and perturbance of bacterial biofilm formation. May form supramolecular fiber-like assemblies on bacterial membranes. Induces cytokine and chemokine producation as well as TNF/TNFA and CSF2/GMCSF production in normal human keratinocytes. Exhibits hemolytic activity against red blood cells. Functionally, exhibits antimicrobial activity against E.coli and B.megaterium (in vitro). The polypeptide is Cathelicidin antimicrobial peptide (Nomascus gabriellae (Red-cheeked gibbon)).